The following is a 115-amino-acid chain: Divalent-cation tolerance protein CutA (115 aa).

Residues C19, H86, and H87 each coordinate Cu cation.

The protein belongs to the CutA family. Homotrimer. Requires Cu cation as cofactor.

Its subcellular location is the cytoplasm. Involved in resistance toward heavy metals. The polypeptide is Divalent-cation tolerance protein CutA (Salmonella agona (strain SL483)).